We begin with the raw amino-acid sequence, 148 residues long: Lysozyme C (148 aa).

An N-terminal signal peptide occupies residues 1-18 (MKALIILGLVLLSVTVQG). The 130-residue stretch at 19 to 148 (KIFERCELAR…VSQYVKGCGV (130 aa)) folds into the C-type lysozyme domain. Cystine bridges form between Cys-24–Cys-146, Cys-48–Cys-134, Cys-83–Cys-99, and Cys-95–Cys-113. Active-site residues include Glu-53 and Asp-71.

Belongs to the glycosyl hydrolase 22 family. Monomer.

The protein localises to the secreted. It catalyses the reaction Hydrolysis of (1-&gt;4)-beta-linkages between N-acetylmuramic acid and N-acetyl-D-glucosamine residues in a peptidoglycan and between N-acetyl-D-glucosamine residues in chitodextrins.. Lysozymes have primarily a bacteriolytic function; those in tissues and body fluids are associated with the monocyte-macrophage system and enhance the activity of immunoagents. The protein is Lysozyme C (LYZ) of Nasalis larvatus (Proboscis monkey).